A 1192-amino-acid polypeptide reads, in one-letter code: Protein WWC2 (1192 aa).

WW domains are found at residues 10–43 (LPLP…DPRD) and 57–90 (DELP…DPRK). Coiled-coil stretches lie at residues 121 to 194 (KEQR…YKEQ) and 224 to 256 (ELKS…FHLD). Ser-286 bears the Phosphoserine mark. Residues 302–421 (LAEKVRLSLQ…KLEETTKLTT (120 aa)) adopt a coiled-coil conformation. The segment at 441–462 (SSLGSLASSRGSLNTSSRGSLN) is disordered. Residues 698 to 821 (ETAQVQIGLR…FSSEVFTLWY (124 aa)) enclose the C2 domain. Residues 859–887 (ALLARTSAELLAVEQELAQEEEEESGQEE) are a coiled coil. Disordered stretches follow at residues 873–895 (QELA…DGDW) and 911–991 (EAEV…SRQH). A compositionally biased stretch (acidic residues) spans 875 to 885 (LAQEEEEESGQ). Polar residues predominate over residues 923–933 (TEDLSSCTSVP). A compositionally biased stretch (basic and acidic residues) spans 938–951 (DGNRKESNCAKDLR). Thr-1004 carries the phosphothreonine modification. A Phosphoserine modification is found at Ser-1022. The interval 1031-1050 (SLFVRNSTERRSLRVKRTVC) is interaction with PRKCZ. Residues 1068-1144 (DLELDLQASL…EQKQGLNAEK (77 aa)) adopt a coiled-coil conformation. The segment covering 1124–1137 (QAEKQAEQSKEEQK) has biased composition (basic and acidic residues). The tract at residues 1124-1143 (QAEKQAEQSKEEQKQGLNAE) is disordered.

Belongs to the WWC family. In terms of assembly, forms homodimers and heterodimers with WWC1 and WWC3. Interacts with DLC1 and PRKCZ. Interacts (via WW domains) with LATS1 and LATS2.

It localises to the cytoplasm. Its subcellular location is the cytosol. Its function is as follows. Regulator of the Hippo signaling pathway, also known as the Salvador-Warts-Hippo (SWH) pathway. Enhances phosphorylation of LATS1 and YAP1 and negatively regulates cell proliferation and organ growth due to a suppression of the transcriptional activity of YAP1, the major effector of the Hippo pathway. The chain is Protein WWC2 from Homo sapiens (Human).